Reading from the N-terminus, the 173-residue chain is Crossover junction endodeoxyribonuclease RuvC (173 aa).

Catalysis depends on residues Asp8, Glu67, and Asp139. Mg(2+) contacts are provided by Asp8, Glu67, and Asp139.

This sequence belongs to the RuvC family. Homodimer which binds Holliday junction (HJ) DNA. The HJ becomes 2-fold symmetrical on binding to RuvC with unstacked arms; it has a different conformation from HJ DNA in complex with RuvA. In the full resolvosome a probable DNA-RuvA(4)-RuvB(12)-RuvC(2) complex forms which resolves the HJ. It depends on Mg(2+) as a cofactor.

Its subcellular location is the cytoplasm. It carries out the reaction Endonucleolytic cleavage at a junction such as a reciprocal single-stranded crossover between two homologous DNA duplexes (Holliday junction).. Functionally, the RuvA-RuvB-RuvC complex processes Holliday junction (HJ) DNA during genetic recombination and DNA repair. Endonuclease that resolves HJ intermediates. Cleaves cruciform DNA by making single-stranded nicks across the HJ at symmetrical positions within the homologous arms, yielding a 5'-phosphate and a 3'-hydroxyl group; requires a central core of homology in the junction. The consensus cleavage sequence is 5'-(A/T)TT(C/G)-3'. Cleavage occurs on the 3'-side of the TT dinucleotide at the point of strand exchange. HJ branch migration catalyzed by RuvA-RuvB allows RuvC to scan DNA until it finds its consensus sequence, where it cleaves and resolves the cruciform DNA. The sequence is that of Crossover junction endodeoxyribonuclease RuvC from Enterobacter sp. (strain 638).